Consider the following 185-residue polypeptide: dCTP deaminase (185 aa).

DCTP-binding positions include 107 to 112 (KSTYAR), 131 to 133 (TLE), glutamine 152, tyrosine 166, and glutamine 176. The active-site Proton donor/acceptor is glutamate 133.

The protein belongs to the dCTP deaminase family. Homotrimer.

It carries out the reaction dCTP + H2O + H(+) = dUTP + NH4(+). It functions in the pathway pyrimidine metabolism; dUMP biosynthesis; dUMP from dCTP (dUTP route): step 1/2. Catalyzes the deamination of dCTP to dUTP. The sequence is that of dCTP deaminase from Anaplasma marginale (strain Florida).